The following is a 131-amino-acid chain: Type 3 secretion system pilotin (131 aa).

The N-terminal stretch at 1 to 15 is a signal peptide; that stretch reads MSRIIALIISFLLVG. Cys-16 is lipidated: N-palmitoyl cysteine. Cys-16 is lipidated: S-diacylglycerol cysteine.

It belongs to the ExsB/YscW family. In terms of assembly, interacts with YscC/SctC.

It is found in the cell outer membrane. Its function is as follows. Involved in the synthesis of the type III secretion system (T3SS), also called injectisome, which is used to inject bacterial effector proteins into eukaryotic host cells. Pilot protein that is required for the proper localization of the secretin YscC/SctC in the outer membrane. Also required for efficient oligomerization of YscC/SctC and stabilization of the oligomers. The sequence is that of Type 3 secretion system pilotin from Yersinia enterocolitica.